We begin with the raw amino-acid sequence, 423 residues long: ATP-citrate synthase alpha chain protein 2 (423 aa).

3 residues coordinate citrate: Asn343, Thr345, and Arg376.

Belongs to the succinate/malate CoA ligase beta subunit family. In terms of assembly, heterooctamer of 4 alpha and 4 beta chains.

It localises to the cytoplasm. The protein localises to the cytosol. The catalysed reaction is oxaloacetate + acetyl-CoA + ADP + phosphate = citrate + ATP + CoA. ATP citrate-lyase is the primary enzyme responsible for the synthesis of cytosolic acetyl-CoA, used for the elongation of fatty acids and biosynthesis of isoprenoids, flavonoids and malonated derivatives. May supply substrate to the cytosolic acetyl-CoA carboxylase, which generates the malonyl-CoA used for the synthesis of a multitude of compounds, including very long chain fatty acids and flavonoids. Required for normal growth and development and elongation of C18 fatty acids to C20 to C24 fatty acids in seeds. In contrast to all known animal ACL enzymes having a homomeric structure, plant ACLs are composed of alpha and beta chains. This is ATP-citrate synthase alpha chain protein 2 (ACLA-2) from Arabidopsis thaliana (Mouse-ear cress).